The chain runs to 35 residues: Conotoxin Cal6.1g (35 aa).

Residues 1–8 (GLSRPSKR) constitute a propeptide that is removed on maturation. Disulfide bonds link Cys-9–Cys-25, Cys-16–Cys-29, and Cys-24–Cys-34.

It belongs to the conotoxin O1 superfamily. Expressed by the venom duct.

Its subcellular location is the secreted. Probable neurotoxin with unknown target. Possibly targets ion channels. This is Conotoxin Cal6.1g from Californiconus californicus (California cone).